Here is a 396-residue protein sequence, read N- to C-terminus: UDP-galactose translocator (396 aa).

The next 10 helical transmembrane spans lie at 3–23 (AVGAGGSTAAPGPGAVSAGAL), 37–57 (YISLAVLVVQNASLILSIRYA), 65–85 (FFATTAVVMAEVLKGLTCLLL), 97–117 (LVLFLHEAVLVQYVDTLKLAV), 140–160 (TFQVTYQLKILTTALFSVLML), 169–189 (WASLLLLFTGVAIVQAQQAGG), 200–220 (GAGLAAVVASCLSSGFAGVYF), 238–258 (LGLFGTALGLVGLWWAEGTAV), 269–289 (PAVWGVVLNQAFGGLLVAVVV), and 315–335 (LFGFHVDPLFALGAGLVIGAV). Residues 358-379 (PCVHQQPPGQPPPPQLSSHRGD) form a disordered region. Residues 392 to 396 (KVKGS) carry the ER retention motif motif.

It belongs to the nucleotide-sugar transporter family. SLC35A subfamily. In terms of assembly, interacts with SLC35A3; the interaction is reduced in the presence of SLC35A4. Found in a complex with SLC35A3 and SLC35A4. Interacts with B4GALT4.

The protein resides in the endoplasmic reticulum membrane. It localises to the golgi apparatus membrane. It catalyses the reaction UMP(out) + UDP-alpha-D-galactose(in) = UMP(in) + UDP-alpha-D-galactose(out). It carries out the reaction UDP-N-acetyl-alpha-D-galactosamine(in) + UMP(out) = UDP-N-acetyl-alpha-D-galactosamine(out) + UMP(in). The enzyme catalyses UMP(out) + UDP-alpha-D-glucose(in) = UMP(in) + UDP-alpha-D-glucose(out). The catalysed reaction is UMP(out) + UDP-N-acetyl-alpha-D-glucosamine(in) = UMP(in) + UDP-N-acetyl-alpha-D-glucosamine(out). It catalyses the reaction UDP-alpha-D-galactose(in) + AMP(out) = UDP-alpha-D-galactose(out) + AMP(in). It carries out the reaction UDP-alpha-D-galactose(in) + CMP(out) = UDP-alpha-D-galactose(out) + CMP(in). The enzyme catalyses UDP-N-acetyl-alpha-D-galactosamine(out) + UDP-alpha-D-galactose(in) = UDP-N-acetyl-alpha-D-galactosamine(in) + UDP-alpha-D-galactose(out). The catalysed reaction is UDP-N-acetyl-alpha-D-glucosamine(out) + UDP-alpha-D-galactose(in) = UDP-N-acetyl-alpha-D-glucosamine(in) + UDP-alpha-D-galactose(out). It catalyses the reaction UDP-alpha-D-galactose(in) + UDP-alpha-D-glucose(out) = UDP-alpha-D-galactose(out) + UDP-alpha-D-glucose(in). It carries out the reaction UMP(out) + CMP(in) = UMP(in) + CMP(out). The enzyme catalyses UMP(out) + AMP(in) = UMP(in) + AMP(out). Transports uridine diphosphate galactose (UDP-galactose) from the cytosol into the Golgi apparatus, functioning as an antiporter that exchanges UDP-galactose for UMP. It is also able to exchange UDP-galactose for AMP and CMP, and to transport UDP-N-acetylgalactosamine (UDP-GalNAc) and other nucleotide sugars. As a provider of UDP-galactose to galactosyltransferases present in the Golgi apparatus, it is necessary for globotriaosylceramide/globoside (Gb3Cer) synthesis from lactosylceramide. In Homo sapiens (Human), this protein is UDP-galactose translocator.